The sequence spans 214 residues: Clavatol biosynthesis cluster protein B (214 aa).

Positions 1–17 are cleaved as a signal peptide; the sequence is MAALSFQCLCVASAVRA. Residues N103 and N204 are each glycosylated (N-linked (GlcNAc...) asparagine).

It participates in secondary metabolite biosynthesis. Its function is as follows. Part of the cla gene cluster that produces clavatol and ortho-quinone methide. The clavatol biosynthesis cluster cla and the terrestric acid cluster tra are both involved in the production of peniphenones and penilactones. The non-reducing PKS claF is responsible for the formation of clavatol from successive condensations of 3 malonyl-CoA units, presumably with a simple acetyl-CoA starter unit, and 2 methylation steps. The esterase claE probably collaborates with claF by catalyzing the hydrolysis of ACP-bound acyl intermediates to free the ACP from stalled intermediates. The clavatol oxidase claD then converts clavatol to hydroxyclavatol. Spontaneous dehydration of hydroxyclavatol leads to the accumulation of the highly active ortho-quinone methide. On the other hand, the PKS-NRPS hybrid traA is involved in the formation of crustosic acid, with the help of traB and traD. The polyketide synthase module (PKS) of traA is responsible for the synthesis of the polyketide backbone via the condensation of an acetyl-CoA starter unit with 3 malonyl-CoA units. The downstream nonribosomal peptide synthetase (NRPS) module then amidates the carboxyl end of the polyketide with L-malic acid. Because traA lacks a designated enoylreductase (ER) domain, the required activity is provided the enoyl reductase traG. Crustosic acid undergoes decarboxylation and isomerization to the terrestric acid, catalyzed by the 2-oxoglutarate-dependent dioxygenase traH. Both acids are further converted to the 2 gamma-butyrolactones (R)-5-methyltetronic acid and (S)-5-carboxylmethyltetronic acid, with involvement of the cytochrome P450 monooxygenase claJ. Spontaneous addition of the methide to these gamma-butyrolactones leads to peniphenone D and penilactone D, which undergo again stereospecific attacking by methide to give penilactones A and B. The function of claB has not been investigated yet. In Penicillium crustosum (Blue mold fungus), this protein is Clavatol biosynthesis cluster protein B.